A 95-amino-acid chain; its full sequence is Aspartyl/glutamyl-tRNA(Asn/Gln) amidotransferase subunit C (95 aa).

Belongs to the GatC family. Heterotrimer of A, B and C subunits.

The enzyme catalyses L-glutamyl-tRNA(Gln) + L-glutamine + ATP + H2O = L-glutaminyl-tRNA(Gln) + L-glutamate + ADP + phosphate + H(+). It carries out the reaction L-aspartyl-tRNA(Asn) + L-glutamine + ATP + H2O = L-asparaginyl-tRNA(Asn) + L-glutamate + ADP + phosphate + 2 H(+). Its function is as follows. Allows the formation of correctly charged Asn-tRNA(Asn) or Gln-tRNA(Gln) through the transamidation of misacylated Asp-tRNA(Asn) or Glu-tRNA(Gln) in organisms which lack either or both of asparaginyl-tRNA or glutaminyl-tRNA synthetases. The reaction takes place in the presence of glutamine and ATP through an activated phospho-Asp-tRNA(Asn) or phospho-Glu-tRNA(Gln). The sequence is that of Aspartyl/glutamyl-tRNA(Asn/Gln) amidotransferase subunit C from Methylobacillus flagellatus (strain ATCC 51484 / DSM 6875 / VKM B-1610 / KT).